A 302-amino-acid polypeptide reads, in one-letter code: Protein transport protein SEC13 homolog A (302 aa).

WD repeat units lie at residues 9–48 (GHSD…GSQH), 54–95 (GHRG…QWTQ), 101–142 (DHKV…GWDT), 148–201 (AHPV…WKMD), 208–251 (KHTD…EQWE), and 257–296 (DFKT…EWEQ).

The protein belongs to the WD repeat SEC13 family. In terms of assembly, interacts with MAG5, SEC31A and SEC31B.

It localises to the golgi apparatus. It is found in the endoplasmic reticulum. Its function is as follows. Required for protein transport from the endoplasmic reticulum to the Golgi apparatus. The chain is Protein transport protein SEC13 homolog A from Arabidopsis thaliana (Mouse-ear cress).